The chain runs to 86 residues: MPKSEIHPKWYPDAKVICNGEVVMTTGSTQPELHVDVWSGNHPFFTGTQKILDTEGRVDRFMKKYGMGSANSATSKEQKADKDSQK.

The disordered stretch occupies residues 66-86 (GMGSANSATSKEQKADKDSQK). Over residues 76–86 (KEQKADKDSQK) the composition is skewed to basic and acidic residues.

It belongs to the bacterial ribosomal protein bL31 family. Type A subfamily. In terms of assembly, part of the 50S ribosomal subunit.

In terms of biological role, binds the 23S rRNA. The polypeptide is Large ribosomal subunit protein bL31 (Prochlorococcus marinus (strain MIT 9215)).